The chain runs to 107 residues: Large ribosomal subunit protein P2 (107 aa).

Low complexity predominate over residues 63–83 (SSVPSGGSAPAAAAPSGGAAP). A disordered region spans residues 63–107 (SSVPSGGSAPAAAAPSGGAAPKAEEKKKEEPKEESDDDMGFGLFD). A compositionally biased stretch (basic and acidic residues) spans 84–93 (KAEEKKKEEP).

Belongs to the eukaryotic ribosomal protein P1/P2 family. In terms of assembly, P1 and P2 exist as dimers at the large ribosomal subunit. Post-translationally, phosphorylated.

In terms of biological role, plays an important role in the elongation step of protein synthesis. The chain is Large ribosomal subunit protein P2 from Caenorhabditis elegans.